We begin with the raw amino-acid sequence, 177 residues long: Large ribosomal subunit protein bL19 (177 aa).

This sequence belongs to the bacterial ribosomal protein bL19 family.

In terms of biological role, this protein is located at the 30S-50S ribosomal subunit interface and may play a role in the structure and function of the aminoacyl-tRNA binding site. The chain is Large ribosomal subunit protein bL19 from Sinorhizobium medicae (strain WSM419) (Ensifer medicae).